Here is a 500-residue protein sequence, read N- to C-terminus: Putative antiporter subunit mnhD2 (500 aa).

14 consecutive transmembrane segments (helical) span residues 2–22, 32–52, 78–98, 108–128, 130–150, 161–181, 209–229, 240–260, 273–293, 308–328, 330–350, 368–388, 403–423, and 450–470; these read MSNLIILPMLLPFVCALILVF, ILSITTMIVNTMISIALLIYV, LSLLMVSVSSFVVTLIMAYGF, FHLPTFILLLTVGVIGSFLTS, LFNLYVMFEIMLLASFVLVTL, IVYVVLNILGSWLLLLGIGML, ISLVFLVAFSSKAALVIFMWL, LAALFAALMTKVGAYALIRFF, TLLVFMACITMIIGAFGVIAY, IGFIILGLGSHTISGVNGAIF, LANDIIVKTLLFFVIGSLVYM, FFGVAFVVVIFAIGGVPPFSG, GNYIGLALMIVTSLIAMYSLF, and GLLSVLVVVVLAMGIAAPVVL.

This sequence belongs to the CPA3 antiporters (TC 2.A.63) subunit D family. May form a heterooligomeric complex that consists of seven subunits: mnhA2, mnhB2, mnhC2, mnhD2, mnhE2, mnhF2 and mnhG2.

The protein resides in the cell membrane. This is Putative antiporter subunit mnhD2 (mnhD2) from Staphylococcus epidermidis (strain ATCC 12228 / FDA PCI 1200).